The sequence spans 440 residues: ATP-dependent protease ATPase subunit HslU (440 aa).

Residues Ile-18, 60–65, Asp-253, Glu-318, and Arg-390 contribute to the ATP site; that span reads GVGKTE.

The protein belongs to the ClpX chaperone family. HslU subfamily. A double ring-shaped homohexamer of HslV is capped on each side by a ring-shaped HslU homohexamer. The assembly of the HslU/HslV complex is dependent on binding of ATP.

The protein localises to the cytoplasm. Its function is as follows. ATPase subunit of a proteasome-like degradation complex; this subunit has chaperone activity. The binding of ATP and its subsequent hydrolysis by HslU are essential for unfolding of protein substrates subsequently hydrolyzed by HslV. HslU recognizes the N-terminal part of its protein substrates and unfolds these before they are guided to HslV for hydrolysis. The sequence is that of ATP-dependent protease ATPase subunit HslU from Shewanella oneidensis (strain ATCC 700550 / JCM 31522 / CIP 106686 / LMG 19005 / NCIMB 14063 / MR-1).